Here is a 422-residue protein sequence, read N- to C-terminus: MDKLRITGGSPLRGEVTVSGAKNAALPILCASLLTAEPLVLGNVPQLNDTSTTLRLLGRMGVRAERAGDGTVTLQADQVDNLEAPYELVKTMRASILVLGPLLARFGQARVSLPGGCAIGQRPVDQHIKGLAALGAEIEIEHGFVVARATRLKGASIRTDMVTVTGTENLLMAAVLAEGQTVLENAAREPEVVDLAELLIKMGARIQGHGTDRIVVDGVARLHGARHDVIADRIEAGTFLCAVGAAGGDITLRGAAPDTMGATLDKLVEAGLTIETGPDWIRGAMHGRPRAVGARTHEYPGFATDMQAQLMALDTVADGTAVIVENIFENRYMHVQELCRLGADIDIDGHTAVVRGVARLSGATVMATDLRASASLVIAGLAAEGETLVDRIYHLDRGYDRMEVKLRALGASIQRVTGKETA.

Residue 22 to 23 (KN) coordinates phosphoenolpyruvate. Position 93 (R93) interacts with UDP-N-acetyl-alpha-D-glucosamine. C117 acts as the Proton donor in catalysis. C117 carries the 2-(S-cysteinyl)pyruvic acid O-phosphothioketal modification. UDP-N-acetyl-alpha-D-glucosamine is bound by residues 122 to 126 (RPVDQ), D305, and I327.

It belongs to the EPSP synthase family. MurA subfamily.

It is found in the cytoplasm. The catalysed reaction is phosphoenolpyruvate + UDP-N-acetyl-alpha-D-glucosamine = UDP-N-acetyl-3-O-(1-carboxyvinyl)-alpha-D-glucosamine + phosphate. The protein operates within cell wall biogenesis; peptidoglycan biosynthesis. In terms of biological role, cell wall formation. Adds enolpyruvyl to UDP-N-acetylglucosamine. The chain is UDP-N-acetylglucosamine 1-carboxyvinyltransferase from Bordetella bronchiseptica (strain ATCC BAA-588 / NCTC 13252 / RB50) (Alcaligenes bronchisepticus).